We begin with the raw amino-acid sequence, 366 residues long: tRNA-specific 2-thiouridylase MnmA (366 aa).

ATP contacts are provided by residues 6 to 13 (AMSGGVDS) and Leu-32. The active-site Nucleophile is the Cys-101. A disulfide bridge links Cys-101 with Cys-197. Residue Gly-125 participates in ATP binding. Positions 147–149 (KDQ) are interaction with tRNA. Cys-197 acts as the Cysteine persulfide intermediate in catalysis.

It belongs to the MnmA/TRMU family.

The protein localises to the cytoplasm. It catalyses the reaction S-sulfanyl-L-cysteinyl-[protein] + uridine(34) in tRNA + AH2 + ATP = 2-thiouridine(34) in tRNA + L-cysteinyl-[protein] + A + AMP + diphosphate + H(+). Its function is as follows. Catalyzes the 2-thiolation of uridine at the wobble position (U34) of tRNA, leading to the formation of s(2)U34. This is tRNA-specific 2-thiouridylase MnmA from Cutibacterium acnes (strain DSM 16379 / KPA171202) (Propionibacterium acnes).